We begin with the raw amino-acid sequence, 1025 residues long: Transcription factor tau 131 kDa subunit (1025 aa).

Positions 1–26 (MAAGKLKKEQQNQSAERESADTGKVN) are enriched in basic and acidic residues. The disordered stretch occupies residues 1-71 (MAAGKLKKEQ…EDEYNSERDS (71 aa)). The segment covering 46–65 (DEEYDDEDVPHDLQLSEDEY) has biased composition (acidic residues). TPR repeat units lie at residues 128–161 (VAQL…DARN), 162–195 (FAAY…NASD), 196–229 (WEFW…NPME), 230–263 (WESI…NPYD), and 264–297 (ANIL…NVER). The segment at 128–569 (VAQLLSQANE…VDVVEMRKHQ (442 aa)) is sufficient to bind BDP1. Positions 309-334 (LDSSDEESAAEGEDADEKEPLEQDED) are disordered. At Ser311 the chain carries Phosphoserine. Positions 311 to 325 (SSDEESAAEGEDADE) are enriched in acidic residues. 6 TPR repeats span residues 432-465 (IDIR…TFSD), 467-501 (ADLY…EWRT), 502-535 (TDVF…EPDD), 536-569 (LDIR…RKHQ), 875-908 (PYLY…IPDD), and 959-992 (QEAD…YDDG).

In terms of assembly, component of the TFIIIC complex composed of TFC1, TFC3, TFC4, TFC6, TFC7 and TFC8. The subunits are organized in two globular domains, tauA and tauB, connected by a proteolysis-sensitive and flexible linker. Interacts with TFC1, TFC3, TFC6, TFIIIB subunits BRF1 and BDP1, and with RNA polymerase III subunit RPC10. Phosphorylated.

It localises to the nucleus. In terms of biological role, TFIIIC mediates tRNA and 5S RNA gene activation by binding to intragenic promoter elements. Upstream of the transcription start site, TFIIIC assembles the initiation complex TFIIIB-TFIIIC-tDNA, which is sufficient for RNA polymerase III recruitment and function. Part of the tauA domain of TFIIIC that binds boxA DNA promoter sites of tRNA and similar genes. TFC4 is the TFIIIB-assembling subunit of TFIIIC and essential for viability. In Saccharomyces cerevisiae (strain ATCC 204508 / S288c) (Baker's yeast), this protein is Transcription factor tau 131 kDa subunit (TFC4).